The following is a 376-amino-acid chain: MCKPRVWRIAHTIVHVGALLLGTSQLTTCDFSGIFATIQQEVAIKSPSIPGAIYGLVKAGDKLYATNGRLWEKELNGIKWKPVPFLDGQDKRIDSLAASNTCVFACVSGDGVYKYTAGTTSSQKESNTDKAQAVVQMSDGKVVLQCALGDEKTTPSDADERLLGGGQGYLVTSKGFYTLPGSASCEVISETKDVTCKAEAPILASACDGSNTYILTKDKVYCRYTNGSGSTPTTWCDVEHKVSEPLALAVFKNKGETFLLVGGQQGYGEIKIATASGSSSSSSCVPLTAENVHATTGWGANCSTPEGSAEQYRSTIGRWAVSGIYVIKKDTSGGRKKRSTSTDCERPDLYVAVGDASDTYTGLWKFDTATNTWNRE.

Residues M1–T28 form the signal peptide. C29 carries the N-palmitoyl cysteine lipid modification. Residue C29 is the site of S-diacylglycerol cysteine attachment.

Belongs to the TP013X lipoprotein family.

The protein localises to the cell membrane. This is an uncharacterized protein from Treponema pallidum (strain Nichols).